Consider the following 327-residue polypeptide: MVREKVKVSTRTLQWKCVESRRDSKRLYYGRFILSPLMKGQADTIGIAMRRALLGEIEGTCITRAKSENIPHDYSNIVGIQESVHEILMNLNEIVLRSNLYGTRNALICVQGPGYITARDIILPPSVEIIDNTQHIATLTEPIDLCIGLKIERNRGYSLKMSNNFEDRSYPIDAVFMPVQNANHSIHSYGNGNEKQEILFLEIWTNGSLTPKEALHEASRNLINLFIPFLHVEEETFYLENNQHQVTLPLFPFHNRLVNLRKKKKELAFQYIFIDQLELPPRIYNCLKKSNIHTLLDLLNNSQEDLIKIEHFHIEDVKKILDILEKK.

Residues 1 to 233 (MVREKVKVST…NLFIPFLHVE (233 aa)) are alpha N-terminal domain (alpha-NTD). Residues 267-327 (LAFQYIFIDQ…KKILDILEKK (61 aa)) are alpha C-terminal domain (alpha-CTD).

This sequence belongs to the RNA polymerase alpha chain family. As to quaternary structure, in plastids the minimal PEP RNA polymerase catalytic core is composed of four subunits: alpha, beta, beta', and beta''. When a (nuclear-encoded) sigma factor is associated with the core the holoenzyme is formed, which can initiate transcription.

It is found in the plastid. Its subcellular location is the chloroplast. The enzyme catalyses RNA(n) + a ribonucleoside 5'-triphosphate = RNA(n+1) + diphosphate. Its function is as follows. DNA-dependent RNA polymerase catalyzes the transcription of DNA into RNA using the four ribonucleoside triphosphates as substrates. This Nasturtium officinale (Watercress) protein is DNA-directed RNA polymerase subunit alpha.